Here is an 83-residue protein sequence, read N- to C-terminus: Cardiotoxin 7a (83 aa).

The signal sequence occupies residues 1–21; sequence MKTLLLTLVVVTIVCLDLGYT. 4 cysteine pairs are disulfide-bonded: cysteine 24/cysteine 43, cysteine 36/cysteine 61, cysteine 65/cysteine 76, and cysteine 77/cysteine 82.

Belongs to the three-finger toxin family. Short-chain subfamily. Orphan group XV sub-subfamily. As to expression, expressed by the venom gland.

The protein localises to the secreted. It localises to the target cell membrane. Has low cytotoxic activity. This Naja atra (Chinese cobra) protein is Cardiotoxin 7a.